The primary structure comprises 654 residues: DNA ligase (654 aa).

NAD(+)-binding positions include 37 to 41 (DEEYD), 86 to 87 (SM), and glutamate 113. Lysine 115 serves as the catalytic N6-AMP-lysine intermediate. Residues arginine 136, glutamate 170, and lysine 308 each coordinate NAD(+). Zn(2+) contacts are provided by cysteine 402, cysteine 405, cysteine 418, and cysteine 423. The BRCT domain maps to 576–654 (ITQNAFSGKS…GEFERLKLEI (79 aa)).

Belongs to the NAD-dependent DNA ligase family. LigA subfamily. Mg(2+) serves as cofactor. Mn(2+) is required as a cofactor.

The catalysed reaction is NAD(+) + (deoxyribonucleotide)n-3'-hydroxyl + 5'-phospho-(deoxyribonucleotide)m = (deoxyribonucleotide)n+m + AMP + beta-nicotinamide D-nucleotide.. DNA ligase that catalyzes the formation of phosphodiester linkages between 5'-phosphoryl and 3'-hydroxyl groups in double-stranded DNA using NAD as a coenzyme and as the energy source for the reaction. It is essential for DNA replication and repair of damaged DNA. The protein is DNA ligase of Campylobacter curvus (strain 525.92).